The sequence spans 424 residues: Trigger factor (424 aa).

The 86-residue stretch at Gly-163–Pro-248 folds into the PPIase FKBP-type domain.

The protein belongs to the FKBP-type PPIase family. Tig subfamily.

The protein localises to the cytoplasm. The catalysed reaction is [protein]-peptidylproline (omega=180) = [protein]-peptidylproline (omega=0). In terms of biological role, involved in protein export. Acts as a chaperone by maintaining the newly synthesized protein in an open conformation. Functions as a peptidyl-prolyl cis-trans isomerase. The sequence is that of Trigger factor from Bacillus pumilus (strain SAFR-032).